A 567-amino-acid chain; its full sequence is Eukaryotic translation initiation factor 3 subunit D (567 aa).

Disordered regions lie at residues 12 to 34 (PVKSAWGPPETEQIGGDIPYAPF) and 122 to 160 (GQNVQRGGRGGRYGSSGGRGAGDTVVSRSSGAGGARGRR). Over residues 128-142 (GGRGGRYGSSGGRGA) the composition is skewed to gly residues. The RNA gate stretch occupies residues 300 to 314 (PFDYLTVNENAYDSP).

It belongs to the eIF-3 subunit D family. Component of the eukaryotic translation initiation factor 3 (eIF-3) complex. The eIF-3 complex appears to include tif32/eif3a, SPAC25G10.08/eif3b, tif33/eif3c, SPBC4C3.07/eif3f, tif35/eif3g and sum1/eif3i. This set of common subunits may also associate exclusively with either moe1/eif3d and int6/eif3e, or with SPAC821.05/eif3h and SPAC1751.03/eif3m. The eIF-3 complex may also include SPAC3A12.13c/eif3j.

The protein localises to the cytoplasm. Its function is as follows. mRNA cap-binding component of the eukaryotic translation initiation factor 3 (eIF-3) complex, which is involved in protein synthesis of a specialized repertoire of mRNAs and, together with other initiation factors, stimulates binding of mRNA and methionyl-tRNAi to the 40S ribosome. The eIF-3 complex specifically targets and initiates translation of a subset of mRNAs involved in cell proliferation. In the eIF-3 complex, eif3d specifically recognizes and binds the 7-methylguanosine cap of a subset of mRNAs. The sequence is that of Eukaryotic translation initiation factor 3 subunit D (moe1) from Schizosaccharomyces pombe (strain 972 / ATCC 24843) (Fission yeast).